An 83-amino-acid polypeptide reads, in one-letter code: MSDKIRLLEGKVSSVAMDKTVVVRAERYVKHPLYGKFVKKTTKYYVHDENNECKEGDVIKFKETRPYSKTKKWCLVDIIHREK.

Belongs to the universal ribosomal protein uS17 family. As to quaternary structure, part of the 30S ribosomal subunit.

Its function is as follows. One of the primary rRNA binding proteins, it binds specifically to the 5'-end of 16S ribosomal RNA. The protein is Small ribosomal subunit protein uS17 of Francisella tularensis subsp. tularensis (strain FSC 198).